A 475-amino-acid chain; its full sequence is Glucose-6-phosphate 1-dehydrogenase gcd1 (475 aa).

Positions 42 and 146 each coordinate NADP(+). D-glucose 6-phosphate contacts are provided by Lys-146, Glu-214, and Asp-233. The active-site Proton acceptor is His-238. Lys-332 is a binding site for D-glucose 6-phosphate. Residues Arg-342 and Arg-365 each contribute to the NADP(+) site.

Belongs to the glucose-6-phosphate dehydrogenase family.

The protein localises to the cytoplasm. The enzyme catalyses D-glucose 6-phosphate + NADP(+) = 6-phospho-D-glucono-1,5-lactone + NADPH + H(+). It functions in the pathway carbohydrate degradation; pentose phosphate pathway; D-ribulose 5-phosphate from D-glucose 6-phosphate (oxidative stage): step 1/3. Catalyzes the rate-limiting step of the oxidative pentose-phosphate pathway, which represents a route for the dissimilation of carbohydrates besides glycolysis. The main function of this enzyme is to provide reducing power (NADPH) and pentose phosphates for fatty acid and nucleic acid synthesis. This Schizosaccharomyces pombe (strain 972 / ATCC 24843) (Fission yeast) protein is Glucose-6-phosphate 1-dehydrogenase gcd1.